The sequence spans 331 residues: Glycerol-3-phosphate dehydrogenase [NAD(P)+] (331 aa).

NADPH-binding residues include Trp11 and Lys101. Residues Lys101, Gly132, and Ser134 each contribute to the sn-glycerol 3-phosphate site. Residue Ala136 coordinates NADPH. Sn-glycerol 3-phosphate is bound by residues Lys188, Asp241, Ser251, Arg252, and Asn253. Lys188 serves as the catalytic Proton acceptor. NADPH is bound at residue Arg252. Glu278 contacts NADPH.

It belongs to the NAD-dependent glycerol-3-phosphate dehydrogenase family.

It is found in the cytoplasm. It carries out the reaction sn-glycerol 3-phosphate + NAD(+) = dihydroxyacetone phosphate + NADH + H(+). It catalyses the reaction sn-glycerol 3-phosphate + NADP(+) = dihydroxyacetone phosphate + NADPH + H(+). Its pathway is membrane lipid metabolism; glycerophospholipid metabolism. In terms of biological role, catalyzes the reduction of the glycolytic intermediate dihydroxyacetone phosphate (DHAP) to sn-glycerol 3-phosphate (G3P), the key precursor for phospholipid synthesis. The chain is Glycerol-3-phosphate dehydrogenase [NAD(P)+] from Phytoplasma mali (strain AT).